The chain runs to 824 residues: Lysine-specific histone demethylase 1B homolog (824 aa).

The disordered stretch occupies residues Met-1 to Val-31. One can recognise an SWIRM domain in the interval Pro-245–Pro-346. FAD contacts are provided by residues Pro-352–Ile-407, Val-579, Glu-788, and Gln-796–Met-798.

It belongs to the flavin monoamine oxidase family. FAD is required as a cofactor. As to expression, in hermaphrodites, expressed in gut cells, embryonic cells and sheath cells. Not expressed in sperm or pharyngeal neurons.

The protein resides in the nucleus. The catalysed reaction is N(6),N(6)-dimethyl-L-lysyl(4)-[histone H3] + 2 A + 2 H2O = L-lysyl(4)-[histone H3] + 2 formaldehyde + 2 AH2. Its function is as follows. Histone demethylase that demethylates di-methylated 'Lys-4' of histone H3, a specific tag for epigenetic transcriptional activation, thereby acting as a corepressor. Acts by oxidizing the substrate by FAD to generate the corresponding imine that is subsequently hydrolyzed. Plays a role in the mitotic development of the germline. May be involved in H3 demethylation in mitotic cells including gut and embryonic cells. Plays a role in sensitivity upon interstrand cross-link DNA damage, probably by positively regulating the expression of mlh-1. Plays a role in developmental growth and lifespan regulation in response to ultraviolet-induced damage. No obvious role in larval development, sex chromosome segregation or for regulating meiotic crossover frequency. This is Lysine-specific histone demethylase 1B homolog from Caenorhabditis elegans.